Consider the following 415-residue polypeptide: Serine hydroxymethyltransferase (415 aa).

(6S)-5,6,7,8-tetrahydrofolate contacts are provided by residues leucine 122 and 126-128 (GHL). Lysine 230 carries the post-translational modification N6-(pyridoxal phosphate)lysine.

This sequence belongs to the SHMT family. Homodimer. Pyridoxal 5'-phosphate is required as a cofactor.

Its subcellular location is the cytoplasm. It carries out the reaction (6R)-5,10-methylene-5,6,7,8-tetrahydrofolate + glycine + H2O = (6S)-5,6,7,8-tetrahydrofolate + L-serine. It participates in one-carbon metabolism; tetrahydrofolate interconversion. The protein operates within amino-acid biosynthesis; glycine biosynthesis; glycine from L-serine: step 1/1. Its function is as follows. Catalyzes the reversible interconversion of serine and glycine with tetrahydrofolate (THF) serving as the one-carbon carrier. This reaction serves as the major source of one-carbon groups required for the biosynthesis of purines, thymidylate, methionine, and other important biomolecules. Also exhibits THF-independent aldolase activity toward beta-hydroxyamino acids, producing glycine and aldehydes, via a retro-aldol mechanism. The chain is Serine hydroxymethyltransferase from Leptothrix cholodnii (strain ATCC 51168 / LMG 8142 / SP-6) (Leptothrix discophora (strain SP-6)).